The primary structure comprises 434 residues: Forkhead box protein A2 (434 aa).

The segment at residues 149 to 243 (KPPYSYISLI…ENGCYLRRQK (95 aa)) is a DNA-binding region (fork-head). Over residues 249-262 (KKPSLREGGGKKLS) the composition is skewed to basic and acidic residues. The tract at residues 249–339 (KKPSLREGGG…VLSHEAQSHL (91 aa)) is disordered. Composition is skewed to low complexity over residues 263 to 291 (EGSS…SSSP) and 317 to 333 (ASQA…VLSH).

It localises to the nucleus. Acts as a transcriptional activator during early development, limiting the extent of mesoderm formation in the gastrula. Binds to DNA via the target sequence 5'-GT[AC]AACA-3', with 5'-GTAAACA-3' being the preferred binding site. This Xenopus tropicalis (Western clawed frog) protein is Forkhead box protein A2.